Here is a 773-residue protein sequence, read N- to C-terminus: Protein YhgF (773 aa).

Residues 651 to 720 enclose the S1 motif domain; it reads GMILEGAVTN…QRKRIALTMR (70 aa). Positions 721–773 are disordered; the sequence is LDEQPGETNARRGGGNERPQNNRPAAKPRGREAQPAGNSAMMDALAAAMGKKR.

The polypeptide is Protein YhgF (yhgF) (Escherichia coli (strain K12)).